A 375-amino-acid polypeptide reads, in one-letter code: Chaperone protein DnaJ (375 aa).

The J domain maps to 5–70 (DYYEVLGVNR…RKRASYDQFG (66 aa)). The segment at 133–211 (GLSRTIKVPT…CHGQGRQQQT (79 aa)) adopts a CR-type zinc-finger fold. Residues Cys-146, Cys-149, Cys-163, Cys-166, Cys-185, Cys-188, Cys-199, and Cys-202 each contribute to the Zn(2+) site. CXXCXGXG motif repeat units follow at residues 146–153 (CKTCNGSG), 163–170 (CPRCNGSG), 185–192 (CSVCRGRG), and 199–206 (CTDCHGQG).

This sequence belongs to the DnaJ family. In terms of assembly, homodimer. Zn(2+) serves as cofactor.

It is found in the cytoplasm. Its function is as follows. Participates actively in the response to hyperosmotic and heat shock by preventing the aggregation of stress-denatured proteins and by disaggregating proteins, also in an autonomous, DnaK-independent fashion. Unfolded proteins bind initially to DnaJ; upon interaction with the DnaJ-bound protein, DnaK hydrolyzes its bound ATP, resulting in the formation of a stable complex. GrpE releases ADP from DnaK; ATP binding to DnaK triggers the release of the substrate protein, thus completing the reaction cycle. Several rounds of ATP-dependent interactions between DnaJ, DnaK and GrpE are required for fully efficient folding. Also involved, together with DnaK and GrpE, in the DNA replication of plasmids through activation of initiation proteins. The chain is Chaperone protein DnaJ from Coxiella burnetii (strain CbuK_Q154) (Coxiella burnetii (strain Q154)).